The chain runs to 116 residues: T cell receptor alpha variable 14/delta variable 4 (116 aa).

The signal sequence occupies residues 1–21; the sequence is MSLSSLLKVVTASLWLGPGIA. Positions 22–116 constitute an Ig-like domain; the sequence is QKITQTQPGM…SAMYFCAMRE (95 aa). A disulfide bond links C43 and C112. N-linked (GlcNAc...) asparagine glycosylation is present at N78.

In terms of assembly, alpha-beta TR is a heterodimer composed of an alpha and beta chain; disulfide-linked. The alpha-beta TR is associated with the transmembrane signaling CD3 coreceptor proteins to form the TR-CD3 (TcR or TCR). The assembly of alpha-beta TR heterodimers with CD3 occurs in the endoplasmic reticulum where a single alpha-beta TR heterodimer associates with one CD3D-CD3E heterodimer, one CD3G-CD3E heterodimer and one CD247 homodimer forming a stable octameric structure. CD3D-CD3E and CD3G-CD3E heterodimers preferentially associate with TR alpha and TR beta chains, respectively. The association of the CD247 homodimer is the last step of TcR assembly in the endoplasmic reticulum and is required for transport to the cell surface.

It is found in the cell membrane. Its function is as follows. V region of the variable domain of T cell receptor (TR) alpha chain that participates in the antigen recognition. Alpha-beta T cell receptors are antigen specific receptors which are essential to the immune response and are present on the cell surface of T lymphocytes. Recognize peptide-major histocompatibility (MH) (pMH) complexes that are displayed by antigen presenting cells (APC), a prerequisite for efficient T cell adaptive immunity against pathogens. Binding of alpha-beta TR to pMH complex initiates TR-CD3 clustering on the cell surface and intracellular activation of LCK that phosphorylates the ITAM motifs of CD3G, CD3D, CD3E and CD247 enabling the recruitment of ZAP70. In turn ZAP70 phosphorylates LAT, which recruits numerous signaling molecules to form the LAT signalosome. The LAT signalosome propagates signal branching to three major signaling pathways, the calcium, the mitogen-activated protein kinase (MAPK) kinase and the nuclear factor NF-kappa-B (NF-kB) pathways, leading to the mobilization of transcription factors that are critical for gene expression and essential for T cell growth and differentiation. The T cell repertoire is generated in the thymus, by V-(D)-J rearrangement. This repertoire is then shaped by intrathymic selection events to generate a peripheral T cell pool of self-MH restricted, non-autoaggressive T cells. Post-thymic interaction of alpha-beta TR with the pMH complexes shapes TR structural and functional avidity. This chain is T cell receptor alpha variable 14/delta variable 4, found in Homo sapiens (Human).